A 239-amino-acid chain; its full sequence is tRNA (guanine-N(7)-)-methyltransferase (239 aa).

S-adenosyl-L-methionine is bound by residues Gly-64, 87–88, 120–121, and Leu-140; these read EI and NA. Asp-143 is a catalytic residue. 218 to 220 contacts S-adenosyl-L-methionine; that stretch reads SEE.

Belongs to the class I-like SAM-binding methyltransferase superfamily. TrmB family.

Its subcellular location is the nucleus. The enzyme catalyses guanosine(46) in tRNA + S-adenosyl-L-methionine = N(7)-methylguanosine(46) in tRNA + S-adenosyl-L-homocysteine. Its pathway is tRNA modification; N(7)-methylguanine-tRNA biosynthesis. In terms of biological role, catalyzes the formation of N(7)-methylguanine at position 46 (m7G46) in tRNA. The chain is tRNA (guanine-N(7)-)-methyltransferase from Culex quinquefasciatus (Southern house mosquito).